The sequence spans 208 residues: Methylthioribulose-1-phosphate dehydratase (208 aa).

Residues His96 and His98 each coordinate Zn(2+).

The protein belongs to the aldolase class II family. MtnB subfamily. It depends on Zn(2+) as a cofactor.

The enzyme catalyses 5-(methylsulfanyl)-D-ribulose 1-phosphate = 5-methylsulfanyl-2,3-dioxopentyl phosphate + H2O. It participates in amino-acid biosynthesis; L-methionine biosynthesis via salvage pathway; L-methionine from S-methyl-5-thio-alpha-D-ribose 1-phosphate: step 2/6. Functionally, catalyzes the dehydration of methylthioribulose-1-phosphate (MTRu-1-P) into 2,3-diketo-5-methylthiopentyl-1-phosphate (DK-MTP-1-P). The protein is Methylthioribulose-1-phosphate dehydratase of Pseudomonas fluorescens (strain Pf0-1).